Reading from the N-terminus, the 398-residue chain is Elongation factor Tu (398 aa).

A tr-type G domain is found at 10 to 207 (KPHVNIGTIG…TVDEYIPEPE (198 aa)). The G1 stretch occupies residues 19-26 (GHVDHGKT). Residue 19–26 (GHVDHGKT) coordinates GTP. Thr-26 serves as a coordination point for Mg(2+). Residues 63–67 (GITIN) form a G2 region. Residues 84–87 (DAPG) form a G3 region. GTP is bound by residues 84–88 (DAPGH) and 139–142 (NKVD). The G4 stretch occupies residues 139 to 142 (NKVD). Residues 177-179 (SAL) form a G5 region.

Belongs to the TRAFAC class translation factor GTPase superfamily. Classic translation factor GTPase family. EF-Tu/EF-1A subfamily. Monomer.

Its subcellular location is the cytoplasm. The catalysed reaction is GTP + H2O = GDP + phosphate + H(+). In terms of biological role, GTP hydrolase that promotes the GTP-dependent binding of aminoacyl-tRNA to the A-site of ribosomes during protein biosynthesis. The protein is Elongation factor Tu of Streptococcus suis (strain 98HAH33).